A 485-amino-acid polypeptide reads, in one-letter code: Glutamyl-tRNA(Gln) amidotransferase subunit A (485 aa).

Residues lysine 79 and serine 154 each act as charge relay system in the active site. Residue serine 178 is the Acyl-ester intermediate of the active site.

This sequence belongs to the amidase family. GatA subfamily. Heterotrimer of A, B and C subunits.

The enzyme catalyses L-glutamyl-tRNA(Gln) + L-glutamine + ATP + H2O = L-glutaminyl-tRNA(Gln) + L-glutamate + ADP + phosphate + H(+). Its function is as follows. Allows the formation of correctly charged Gln-tRNA(Gln) through the transamidation of misacylated Glu-tRNA(Gln) in organisms which lack glutaminyl-tRNA synthetase. The reaction takes place in the presence of glutamine and ATP through an activated gamma-phospho-Glu-tRNA(Gln). In Clostridium botulinum (strain Eklund 17B / Type B), this protein is Glutamyl-tRNA(Gln) amidotransferase subunit A.